Reading from the N-terminus, the 297-residue chain is tRNA dimethylallyltransferase (297 aa).

ATP is bound at residue 10–17 (GITASGKS). 12 to 17 (TASGKS) is a substrate binding site. Residues 36–39 (DSKQ) form an interaction with substrate tRNA region.

Belongs to the IPP transferase family. As to quaternary structure, monomer. It depends on Mg(2+) as a cofactor.

It catalyses the reaction adenosine(37) in tRNA + dimethylallyl diphosphate = N(6)-dimethylallyladenosine(37) in tRNA + diphosphate. In terms of biological role, catalyzes the transfer of a dimethylallyl group onto the adenine at position 37 in tRNAs that read codons beginning with uridine, leading to the formation of N6-(dimethylallyl)adenosine (i(6)A). This Wolbachia sp. subsp. Brugia malayi (strain TRS) protein is tRNA dimethylallyltransferase.